We begin with the raw amino-acid sequence, 187 residues long: Adenine phosphoribosyltransferase (187 aa).

The protein belongs to the purine/pyrimidine phosphoribosyltransferase family. As to quaternary structure, homodimer.

The protein localises to the cytoplasm. It catalyses the reaction AMP + diphosphate = 5-phospho-alpha-D-ribose 1-diphosphate + adenine. It functions in the pathway purine metabolism; AMP biosynthesis via salvage pathway; AMP from adenine: step 1/1. In terms of biological role, catalyzes a salvage reaction resulting in the formation of AMP, that is energically less costly than de novo synthesis. In Burkholderia pseudomallei (strain 1106a), this protein is Adenine phosphoribosyltransferase.